The sequence spans 458 residues: Kelch repeat and BTB domain-containing protein 13 (458 aa).

The region spanning 7-74 (VPVQVWVDGQ…LRGERPALAA (68 aa)) is the BTB domain. 5 Kelch repeats span residues 159 to 209 (AVST…TLGN), 210 to 258 (KLYI…GFEG), 259 to 305 (RLYA…QARG), 307 to 350 (LFVC…VAHR), and 352 to 400 (SLYV…VVRG).

In terms of assembly, component of the BCR(KBTBD13) E3 ubiquitin ligase complex, at least composed of CUL3 and KBTBD13 and RBX1. Interacts with CUL3. Autoubiquitinated. In terms of tissue distribution, expressed in skeletal muscle, heart and lung.

The protein localises to the cytoplasm. The protein operates within protein modification; protein ubiquitination. Substrate-specific adapter of a BCR (BTB-CUL3-RBX1) E3 ubiquitin ligase complex. In Mus musculus (Mouse), this protein is Kelch repeat and BTB domain-containing protein 13 (Kbtbd13).